A 405-amino-acid chain; its full sequence is Bone morphogenetic protein 4 (405 aa).

A signal peptide spans M1–G19. Positions G20–R291 are excised as a propeptide. N-linked (GlcNAc...) asparagine glycosylation is found at N144, N208, N347, and N362. Intrachain disulfides connect C305/C370, C334/C402, and C338/C404.

Belongs to the TGF-beta family. Homodimer; disulfide-linked. Part of a complex consisting of TWSG1 and CHRD. Forms a ternary complex with chordin/CHRD and TSKU.

It localises to the secreted. Its function is as follows. Negatively regulates the structure and function of the limb apical ectodermal ridge. In Gallus gallus (Chicken), this protein is Bone morphogenetic protein 4 (BMP4).